We begin with the raw amino-acid sequence, 473 residues long: Trigger factor (473 aa).

The PPIase FKBP-type domain occupies 162 to 243 (GDFVSIDLSA…VKSIKVRELP (82 aa)). Residues 433–473 (TAEFFGPSGEQAEAEQDEAAPAEDATEETDADSDEAADDSK) form a disordered region. The segment covering 444–473 (AEAEQDEAAPAEDATEETDADSDEAADDSK) has biased composition (acidic residues).

It belongs to the FKBP-type PPIase family. Tig subfamily.

The protein localises to the cytoplasm. It catalyses the reaction [protein]-peptidylproline (omega=180) = [protein]-peptidylproline (omega=0). In terms of biological role, involved in protein export. Acts as a chaperone by maintaining the newly synthesized protein in an open conformation. Functions as a peptidyl-prolyl cis-trans isomerase. In Mycolicibacterium vanbaalenii (strain DSM 7251 / JCM 13017 / BCRC 16820 / KCTC 9966 / NRRL B-24157 / PYR-1) (Mycobacterium vanbaalenii), this protein is Trigger factor.